Consider the following 364-residue polypeptide: Fructose-1,6-bisphosphatase class 1 2 (364 aa).

E99, D121, L123, and D124 together coordinate Mg(2+). Substrate is bound by residues 124 to 127 (DGSS) and N220. Mg(2+) is bound at residue E292.

Belongs to the FBPase class 1 family. In terms of assembly, homotetramer. Mg(2+) serves as cofactor.

The protein resides in the cytoplasm. It carries out the reaction beta-D-fructose 1,6-bisphosphate + H2O = beta-D-fructose 6-phosphate + phosphate. Its pathway is carbohydrate biosynthesis; gluconeogenesis. In Polaromonas naphthalenivorans (strain CJ2), this protein is Fructose-1,6-bisphosphatase class 1 2.